Consider the following 554-residue polypeptide: MLO-like protein 14 (554 aa).

Residues 1-13 (MREETEPSERTLG) lie on the Extracellular side of the membrane. Residues 14-34 (LTPTWSVATVLTIFVFVSLIV) traverse the membrane as a helical segment. The Cytoplasmic portion of the chain corresponds to 35–63 (ERSIHRLSNWLQKTKRKPLFAALEKMKEE). The helical transmembrane segment at 64-84 (LMLLGFISLLLTATSSTIANI) threads the bilayer. Topologically, residues 85–158 (CVSSSFHNDR…SYEGMEQLHR (74 aa)) are extracellular. The helical transmembrane segment at 159–179 (FIFIMAVTHVTYSCLTMLLAI) threads the bilayer. The Cytoplasmic portion of the chain corresponds to 180–281 (VKIHRWRIWE…MIRSMEEEFQ (102 aa)). Residues 282-302 (KIVGVSGPLWGFVVGFMLFNI) form a helical membrane-spanning segment. A topological domain (extracellular) is located at residue lysine 303. A helical transmembrane segment spans residues 304–324 (GSNLYFWLAIIPITLVLLVGA). The Cytoplasmic portion of the chain corresponds to 325–366 (KLQHVIATLALENASITEYASGIKLRPRDELFWFKKPELLLS). Residues 367–387 (LIHFIQFQNAFELASFFWFWW) form a helical membrane-spanning segment. The Extracellular portion of the chain corresponds to 388–406 (QFGYNSCFLRNHLLVYLRL). Residues 407–427 (ILGFSGQFLCSYSTLPLYALV) form a helical membrane-spanning segment. At 428–554 (TQMGTNYKAA…SSSLPMRREC (127 aa)) the chain is on the cytoplasmic side. The tract at residues 441–462 (QRVRETINGWGKATRRKRRHGL) is calmodulin-binding.

This sequence belongs to the MLO family.

It localises to the membrane. Functionally, may be involved in modulation of pathogen defense and leaf cell death. Activity seems to be regulated by Ca(2+)-dependent calmodulin binding and seems not to require heterotrimeric G proteins. In Arabidopsis thaliana (Mouse-ear cress), this protein is MLO-like protein 14 (MLO14).